We begin with the raw amino-acid sequence, 372 residues long: Formylglycine-generating enzyme (372 aa).

An N-terminal signal peptide occupies residues 1–31; that stretch reads MAAPAREPALRCCIRLARVFLLLVLACEVAG. Cysteines 48 and 50 form a disulfide. Positions 61 to 80 are disordered; it reads SSAAAQRYSREANAPGLTSG. E128 contacts Ca(2+). The N-linked (GlcNAc...) asparagine glycan is linked to N139. 2 cysteine pairs are disulfide-bonded: C216–C363 and C233–C344. N257, I258, D271, F273, N291, G294, and E298 together coordinate Ca(2+). Cu(2+)-binding residues include C334 and C339. The tract at residues 339 to 358 is interaction with sulfatases; it reads CYRYRCAARSQNTPDSSASN.

The protein belongs to the sulfatase-modifying factor family. As to quaternary structure, monomer, homodimer and heterodimer with SUMF2. Cu(2+) serves as cofactor. In terms of processing, N-glycosylated. Contains high-mannose-type oligosaccharides.

It is found in the endoplasmic reticulum lumen. It catalyses the reaction L-cysteinyl-[sulfatase] + 2 a thiol + O2 = an organic disulfide + 3-oxo-L-alanyl-[sulfatase] + hydrogen sulfide + H2O + H(+). Its pathway is protein modification; sulfatase oxidation. In terms of biological role, oxidase that catalyzes the conversion of cysteine to 3-oxoalanine on target proteins, using molecular oxygen and an unidentified reducing agent. 3-oxoalanine modification, which is also named formylglycine (fGly), occurs in the maturation of arylsulfatases and some alkaline phosphatases that use the hydrated form of 3-oxoalanine as a catalytic nucleophile. Known substrates include GALNS, ARSA, STS and ARSE. This chain is Formylglycine-generating enzyme, found in Mus musculus (Mouse).